Consider the following 64-residue polypeptide: Putative neurotoxin-G (64 aa).

A signal peptide spans 1-19; the sequence is MFAMVTVTVLLLISSGIFC. Intrachain disulfides connect Cys25/Cys45, Cys32/Cys54, and Cys36/Cys56.

As to expression, expressed by the venom gland.

The protein localises to the secreted. The chain is Putative neurotoxin-G from Lychas mucronatus (Chinese swimming scorpion).